The primary structure comprises 292 residues: MRIIKYLTILVISVVILTSCQSSSSQESTKSGEFRIVPTTVALTMTLDKLDLPIVGKPTSYKTLPNRYKDVPEIGQPMEPNVEAVKKLKPTHVLSVSTIKDEMQPFYKQLNMKGYFYDFDSLKGMQKSITQLGDQFNRKAQAKELNDHLNSVKQKIENKAVKQKKHPKVLILMGVPGSYLVATDKSYIGDLVKIAGGENVIKVKDRQYISSNTENLLNINPDIILRLPHGMPEEVKKMFQKEFKQNDIWKHFKAVKNNHVYDLEEVPFGITANVDADKAMTQLYDLFYKDKK.

Positions Met1–Ser19 are cleaved as a signal peptide. Cys20 carries N-palmitoyl cysteine lipidation. A lipid anchor (S-diacylglycerol cysteine) is attached at Cys20. Residues Arg35–Lys291 form the Fe/B12 periplasmic-binding domain. Heme contacts are provided by Val41, Ala42, Ser60, Tyr61, Met78, and His229.

This sequence belongs to the bacterial solute-binding protein 8 family. Requires heme b as cofactor.

It localises to the cell membrane. Functionally, involved in heme (porphyrin) scavenging. Binds Fe(2+) and Fe(3+) heme but the largest fraction is Fe(2+) heme. Functions as a high-affinity heme binding protein and probably has a role in relaying heme-iron from cell wall-anchored isd proteins receptors to the probable permease IsdF. The chain is High-affinity heme uptake system protein IsdE (isdE) from Staphylococcus aureus (strain bovine RF122 / ET3-1).